The sequence spans 346 residues: Glycosyltransferase 1 domain-containing protein 1 (346 aa).

The signal sequence occupies residues 1–16 (MRLLFLAVLRPHTGNA).

The protein belongs to the glycosyltransferase group 1 family. Glycosyltransferase 4 subfamily.

It is found in the secreted. The sequence is that of Glycosyltransferase 1 domain-containing protein 1 (GLT1D1) from Pongo abelii (Sumatran orangutan).